The chain runs to 130 residues: Small ribosomal subunit protein uS9 (130 aa).

The disordered stretch occupies residues 105–130 (TRDPRMKERKKYGLKKARRAPQFSKR). Over residues 111-130 (KERKKYGLKKARRAPQFSKR) the composition is skewed to basic residues.

It belongs to the universal ribosomal protein uS9 family.

This chain is Small ribosomal subunit protein uS9, found in Acetivibrio thermocellus (strain ATCC 27405 / DSM 1237 / JCM 9322 / NBRC 103400 / NCIMB 10682 / NRRL B-4536 / VPI 7372) (Clostridium thermocellum).